A 177-amino-acid chain; its full sequence is Bifunctional protein PyrR (177 aa).

The PRPP-binding signature appears at 99–111 (VVLVDDVLYTGRT).

It belongs to the purine/pyrimidine phosphoribosyltransferase family. PyrR subfamily.

It carries out the reaction UMP + diphosphate = 5-phospho-alpha-D-ribose 1-diphosphate + uracil. Its function is as follows. Regulates the transcription of the pyrimidine nucleotide (pyr) operon in response to exogenous pyrimidines. In terms of biological role, also displays a weak uracil phosphoribosyltransferase activity which is not physiologically significant. This Akkermansia muciniphila (strain ATCC BAA-835 / DSM 22959 / JCM 33894 / BCRC 81048 / CCUG 64013 / CIP 107961 / Muc) protein is Bifunctional protein PyrR.